The sequence spans 302 residues: Phosphoribosylaminoimidazole-succinocarboxamide synthase (302 aa).

This sequence belongs to the SAICAR synthetase family.

The catalysed reaction is 5-amino-1-(5-phospho-D-ribosyl)imidazole-4-carboxylate + L-aspartate + ATP = (2S)-2-[5-amino-1-(5-phospho-beta-D-ribosyl)imidazole-4-carboxamido]succinate + ADP + phosphate + 2 H(+). It functions in the pathway purine metabolism; IMP biosynthesis via de novo pathway; 5-amino-1-(5-phospho-D-ribosyl)imidazole-4-carboxamide from 5-amino-1-(5-phospho-D-ribosyl)imidazole-4-carboxylate: step 1/2. The protein is Phosphoribosylaminoimidazole-succinocarboxamide synthase of Leptothrix cholodnii (strain ATCC 51168 / LMG 8142 / SP-6) (Leptothrix discophora (strain SP-6)).